The following is an 822-amino-acid chain: MLPLFLVLSYLGQVIAAGKDVETPLLQITVPEKIDTNIQDAKEAETQVTYVVRIEGKAYTLQLEKQSFLHPLFGTYLRDKLGTLQPYFSLVKTHCFYQGHAAEIPVSTVTLSTCSGLRGLLQLENITYGIEPLESSATFEHILYEIKNNKIDYSPLKENFANSEQESQSYRILVKPEKGSNSTLTKRILRIKIIMDKAMFDHMGSEVGVATQKVVHIFGLINTMFSQLKMTVMLNSLEIWSEQDKIETNGDADEVLQRFLLWKSKEISQKAQDITYLLLYKDHPDYVGATYHGMACNPNFTAGIALHPKTLAVEGFAIVLSQLLGINLGLAYDDVYNCFCPGSTCIMNPSAIRSQGIKVFSSCSVDEFKQLASQPELDCLRNTSETEFVVQPQGGSYCGNHLLEVPEQCDCGPPETCTHKKCCNPKDCTLIDAAQCGTGPCCDKRTCTIAERGRLCRKSKDQCDFPEFCNGETEGCAPDTKAADLEPCNNETAYCFGGVCRDPDRQCTDLFGKYAKGPNYVCAQEVNLQNDKFGNCHGRCNYSAIFCGKAVCYWNFAEVIQTEKYDVQYTYLGGQVCVSAHLRSQTGTRDDTYVHDGTVCGSGQVCFRGDCLRVHVLRGTRECEADDKCQGHGICNNLNNCQCESGFAPPECDMTPSSPGGSMDDGFWLPFDKSTPLIFKRHGLKYKKVLLISFYILLPFLVVLAFMAVKRMIGKRLAKQNISKALEHKEEAFNRGSMNPGVVSGGNTDQNLMTVPGSFNSYAYHGNTDQNFMTVPGSFNSYSYHGNTDQNFMTVPGSFNSYSYQDVPYYRSIPEDGNDSQQ.

Positions 1 to 16 (MLPLFLVLSYLGQVIA) are cleaved as a signal peptide. The region spanning 187 to 384 (RILRIKIIMD…PELDCLRNTS (198 aa)) is the Peptidase M12B domain. 7 cysteine pairs are disulfide-bonded: C296–C379, C338–C363, C340–C345, C456–C476, C623–C635, C629–C641, and C643–C652. The 90-residue stretch at 395–484 (GSYCGNHLLE…GCAPDTKAAD (90 aa)) folds into the Disintegrin domain. In terms of domain architecture, EGF-like spans 619–653 (GTRECEADDKCQGHGICNNLNNCQCESGFAPPECD). Residues 689-709 (VLLISFYILLPFLVVLAFMAV) form a helical membrane-spanning segment.

Interacts with LY6K. Interacts with TEX101. In terms of processing, initially synthesized as a 110-kDa precursor in round spermatids, and the precursor is then processed into a 42-kDa mature protein during the sperm transport into and/or once in the epididymis. Expressed in sperm (at protein level).

It is found in the cell membrane. Involved in fertilization by controlling sperm migration into the oviduct. Promotes the binding of sperm to the oocyte zona pellucida. This chain is A disintegrin and metallopeptidase domain 3, found in Mus musculus (Mouse).